The following is a 319-amino-acid chain: MAQPSNYWKQDLLPLSILILTLVATECTIGIIASGIITVVNAVSWVQKRAVSITTRILLLLSVSRIGLQSIILIEMTSSIFNFSSYNSVLYRVSRVSFVFLNYCSLWFAALLSFFHFVKIANFSYPLFFKLKWRISELMPWLLWLSVFISFSSSMFFCNHKYTVYNNISLSSNICNFTMELYVAEANVVNVAFLFSFGILPPLTMFIATATLLIFSLRRHTLHMRNGDADSRNPRVEAHKQAIKETSCFLFLYILYAAVLFLSTSNIADASLFWSSVLRISLPVYPAGHSVLLIQSNPGLKRTWKQLLSQIHLHLQSRY.

The Extracellular portion of the chain corresponds to M1 to S16. Residues I17–I37 form a helical membrane-spanning segment. Topologically, residues T38 to R56 are cytoplasmic. A helical transmembrane segment spans residues I57–T77. Residues S78 to S97 are Extracellular-facing. An N-linked (GlcNAc...) asparagine glycan is attached at N82. The chain crosses the membrane as a helical span at residues F98 to V118. At K119–E137 the chain is on the cytoplasmic side. Residues L138–C158 traverse the membrane as a helical segment. Over N159–N187 the chain is Extracellular. N167 and N176 each carry an N-linked (GlcNAc...) asparagine glycan. Residues V188–A208 traverse the membrane as a helical segment. Residues T209–S247 are Cytoplasmic-facing. A helical membrane pass occupies residues C248 to A268. Over D269–F273 the chain is Extracellular. A helical transmembrane segment spans residues W274–I294. The Cytoplasmic segment spans residues Q295–Y319.

The protein belongs to the G-protein coupled receptor T2R family.

The protein localises to the membrane. Its function is as follows. Putative taste receptor which may play a role in the perception of bitterness. This chain is Taste receptor type 2 member 39, found in Rattus norvegicus (Rat).